The primary structure comprises 760 residues: DNA-directed RNA polymerase subunit beta' (760 aa).

Zn(2+) contacts are provided by Cys76, Cys78, Cys90, and Cys93. 3 residues coordinate Mg(2+): Asp594, Asp596, and Asp598.

The protein belongs to the RNA polymerase beta' chain family. RpoC1 subfamily. In plastids the minimal PEP RNA polymerase catalytic core is composed of four subunits: alpha, beta, beta', and beta''. When a (nuclear-encoded) sigma factor is associated with the core the holoenzyme is formed, which can initiate transcription. Requires Mg(2+) as cofactor. The cofactor is Zn(2+).

It is found in the plastid. The protein resides in the chloroplast. It catalyses the reaction RNA(n) + a ribonucleoside 5'-triphosphate = RNA(n+1) + diphosphate. Its function is as follows. DNA-dependent RNA polymerase catalyzes the transcription of DNA into RNA using the four ribonucleoside triphosphates as substrates. The chain is DNA-directed RNA polymerase subunit beta' from Bigelowiella natans (Pedinomonas minutissima).